The following is a 397-amino-acid chain: Ribosomal RNA large subunit methyltransferase I (397 aa).

Residues 2-80 (SAAIYLVKGR…QDVNRAFFVK (79 aa)) form the PUA domain.

It belongs to the methyltransferase superfamily. RlmI family.

Its subcellular location is the cytoplasm. The enzyme catalyses cytidine(1962) in 23S rRNA + S-adenosyl-L-methionine = 5-methylcytidine(1962) in 23S rRNA + S-adenosyl-L-homocysteine + H(+). Functionally, specifically methylates the cytosine at position 1962 (m5C1962) of 23S rRNA. This chain is Ribosomal RNA large subunit methyltransferase I, found in Vibrio vulnificus (strain YJ016).